We begin with the raw amino-acid sequence, 238 residues long: Demethylmenaquinone methyltransferase (238 aa).

S-adenosyl-L-methionine-binding positions include Thr60, Asp81, and 108–109; that span reads NA.

The protein belongs to the class I-like SAM-binding methyltransferase superfamily. MenG/UbiE family.

The enzyme catalyses a 2-demethylmenaquinol + S-adenosyl-L-methionine = a menaquinol + S-adenosyl-L-homocysteine + H(+). Its pathway is quinol/quinone metabolism; menaquinone biosynthesis; menaquinol from 1,4-dihydroxy-2-naphthoate: step 2/2. In terms of biological role, methyltransferase required for the conversion of demethylmenaquinol (DMKH2) to menaquinol (MKH2). In Oceanobacillus iheyensis (strain DSM 14371 / CIP 107618 / JCM 11309 / KCTC 3954 / HTE831), this protein is Demethylmenaquinone methyltransferase.